A 285-amino-acid polypeptide reads, in one-letter code: Probable endonuclease 4 (285 aa).

9 residues coordinate Zn(2+): His69, His109, Glu145, Asp179, His182, His216, Asp229, His231, and Glu261.

Belongs to the AP endonuclease 2 family. Zn(2+) is required as a cofactor.

The catalysed reaction is Endonucleolytic cleavage to 5'-phosphooligonucleotide end-products.. In terms of biological role, endonuclease IV plays a role in DNA repair. It cleaves phosphodiester bonds at apurinic or apyrimidinic (AP) sites, generating a 3'-hydroxyl group and a 5'-terminal sugar phosphate. The polypeptide is Probable endonuclease 4 (Shigella boydii serotype 18 (strain CDC 3083-94 / BS512)).